A 312-amino-acid chain; its full sequence is MNKNKSNKLKGIVVALKANFLIVEIDHKNFKDYSFDEFNGKIRLLCIRRSKLNYQGLFIDVGDIVGVESIDYKNKRAVVSDVEPRQSFLKRPAVANVTLVSICISADEPLFDMEQTSRFLLTAECANIEPLIILTKIDLITKNDLILYINKFKSWGYDCIPVSIHNSQGIDSLIERLRKTKLTVLAGPSGVGKTSLINHLIPTVSLPTSSVSKKLKRGTHTTRHVELFAIGNGSLLADTPGFNRPEIVCEPSDFAFLFPEFRTQLSNSQCKFRNCLHRDEPGCVIDKDLERYPFYRENLEEMINSPLPYQAG.

Positions 86–245 constitute a CP-type G domain; that stretch reads QSFLKRPAVA…LADTPGFNRP (160 aa). GTP-binding positions include 135 to 138 and 187 to 195; these read TKID and GPSGVGKTS. Cysteine 270, cysteine 275, histidine 277, and cysteine 283 together coordinate Zn(2+).

It belongs to the TRAFAC class YlqF/YawG GTPase family. RsgA subfamily. In terms of assembly, monomer. Associates with 30S ribosomal subunit, binds 16S rRNA. Zn(2+) is required as a cofactor.

Its subcellular location is the cytoplasm. Functionally, one of several proteins that assist in the late maturation steps of the functional core of the 30S ribosomal subunit. Helps release RbfA from mature subunits. May play a role in the assembly of ribosomal proteins into the subunit. Circularly permuted GTPase that catalyzes slow GTP hydrolysis, GTPase activity is stimulated by the 30S ribosomal subunit. The polypeptide is Small ribosomal subunit biogenesis GTPase RsgA (Prochlorococcus marinus (strain NATL1A)).